The chain runs to 175 residues: Large ribosomal subunit protein uL10 (175 aa).

It belongs to the universal ribosomal protein uL10 family. Part of the ribosomal stalk of the 50S ribosomal subunit. The N-terminus interacts with L11 and the large rRNA to form the base of the stalk. The C-terminus forms an elongated spine to which L12 dimers bind in a sequential fashion forming a multimeric L10(L12)X complex.

Its function is as follows. Forms part of the ribosomal stalk, playing a central role in the interaction of the ribosome with GTP-bound translation factors. This chain is Large ribosomal subunit protein uL10, found in Prochlorococcus marinus (strain MIT 9313).